The sequence spans 101 residues: Small ribosomal subunit protein uS14A (101 aa).

Positions 31–74 are disordered; it reads IRKPSTPEADRAAAQAALQRLPRDASPVRLRNRDAADGRPRGHL. Residues 61-70 are compositionally biased toward basic and acidic residues; it reads RNRDAADGRP.

Belongs to the universal ribosomal protein uS14 family. In terms of assembly, part of the 30S ribosomal subunit. Contacts proteins S3 and S10.

Binds 16S rRNA, required for the assembly of 30S particles and may also be responsible for determining the conformation of the 16S rRNA at the A site. The polypeptide is Small ribosomal subunit protein uS14A (Nocardia farcinica (strain IFM 10152)).